Consider the following 198-residue polypeptide: Probable GTP-binding protein EngB (198 aa).

The region spanning 22–195 (DLPEIALAGR…WKAIHKMTKT (174 aa)) is the EngB-type G domain. GTP-binding positions include 30-37 (GRSNVGKS), 57-61 (GKTQT), 75-78 (DVPG), 142-145 (TKAD), and 174-176 (FSS). S37 and T59 together coordinate Mg(2+).

It belongs to the TRAFAC class TrmE-Era-EngA-EngB-Septin-like GTPase superfamily. EngB GTPase family. Requires Mg(2+) as cofactor.

In terms of biological role, necessary for normal cell division and for the maintenance of normal septation. This chain is Probable GTP-binding protein EngB, found in Bacillus mycoides (strain KBAB4) (Bacillus weihenstephanensis).